Here is a 311-residue protein sequence, read N- to C-terminus: Formimidoylglutamase (311 aa).

Mn(2+) is bound by residues His-130, Asp-155, His-157, Asp-159, Cys-242, and Asp-244.

The protein belongs to the arginase family. Mn(2+) is required as a cofactor.

The enzyme catalyses N-formimidoyl-L-glutamate + H2O = formamide + L-glutamate. The protein operates within amino-acid degradation; L-histidine degradation into L-glutamate; L-glutamate from N-formimidoyl-L-glutamate (hydrolase route): step 1/1. Its function is as follows. Catalyzes the conversion of N-formimidoyl-L-glutamate to L-glutamate and formamide. This Staphylococcus aureus (strain bovine RF122 / ET3-1) protein is Formimidoylglutamase.